We begin with the raw amino-acid sequence, 364 residues long: Biotin synthase (364 aa).

Residues 68–303 (CCGNTVDLCS…QQILRYAGGR (236 aa)) form the Radical SAM core domain. [4Fe-4S] cluster-binding residues include Cys-86, Cys-90, and Cys-93. [2Fe-2S] cluster is bound by residues Cys-131, Cys-168, Cys-228, and Arg-298.

It belongs to the radical SAM superfamily. Biotin synthase family. Homodimer. [4Fe-4S] cluster is required as a cofactor. The cofactor is [2Fe-2S] cluster.

It carries out the reaction (4R,5S)-dethiobiotin + (sulfur carrier)-SH + 2 reduced [2Fe-2S]-[ferredoxin] + 2 S-adenosyl-L-methionine = (sulfur carrier)-H + biotin + 2 5'-deoxyadenosine + 2 L-methionine + 2 oxidized [2Fe-2S]-[ferredoxin]. It participates in cofactor biosynthesis; biotin biosynthesis; biotin from 7,8-diaminononanoate: step 2/2. Functionally, catalyzes the conversion of dethiobiotin (DTB) to biotin by the insertion of a sulfur atom into dethiobiotin via a radical-based mechanism. The chain is Biotin synthase from Microcystis aeruginosa (strain NIES-843 / IAM M-2473).